A 331-amino-acid chain; its full sequence is MRLVFAGTPAVALPSLRALIDSPRHEVVAVVTRPDRPAGRGRKIKPPPVHLLADEAGIPVLSPERPRDPDFLAALTDLAPDCCPVVAYGALLPREALAIPRHGWVNLHFSLLPAYRGAAPVQRTVLAGDDLTGASVFQIEPAMDSGPVFGVVTERVRPTDTSGDLLDRLADSGAHLLAAVMDGIDDGTLQAVPQPAEGVSFAPKLTAQDALIDWTLPAVAVDRLTRAAAPAPGAWTVFRDRRIKIGPVRLGAQNVPDELAPGRLVALADGAVAVGTGTAPVLLDEVRPEGRGPMKAADWARGARLTDDDLLHAPAERVSAAGSPAGAGGAP.

110 to 113 (SLLP) contributes to the (6S)-5,6,7,8-tetrahydrofolate binding site. The disordered stretch occupies residues 312-331 (HAPAERVSAAGSPAGAGGAP).

The protein belongs to the Fmt family.

The catalysed reaction is L-methionyl-tRNA(fMet) + (6R)-10-formyltetrahydrofolate = N-formyl-L-methionyl-tRNA(fMet) + (6S)-5,6,7,8-tetrahydrofolate + H(+). Functionally, attaches a formyl group to the free amino group of methionyl-tRNA(fMet). The formyl group appears to play a dual role in the initiator identity of N-formylmethionyl-tRNA by promoting its recognition by IF2 and preventing the misappropriation of this tRNA by the elongation apparatus. This Frankia alni (strain DSM 45986 / CECT 9034 / ACN14a) protein is Methionyl-tRNA formyltransferase.